We begin with the raw amino-acid sequence, 222 residues long: Ribosomal RNA small subunit methyltransferase G (222 aa).

S-adenosyl-L-methionine is bound by residues G85, L90, 108 to 110, 136 to 137, and R150; these read DAT and VE.

Belongs to the methyltransferase superfamily. RNA methyltransferase RsmG family.

The protein localises to the cytoplasm. Functionally, specifically methylates the N7 position of a guanine in 16S rRNA. This chain is Ribosomal RNA small subunit methyltransferase G, found in Chlorobium phaeobacteroides (strain DSM 266 / SMG 266 / 2430).